The primary structure comprises 55 residues: Large ribosomal subunit protein bL33 (55 aa).

This sequence belongs to the bacterial ribosomal protein bL33 family.

The sequence is that of Large ribosomal subunit protein bL33 from Bradyrhizobium diazoefficiens (strain JCM 10833 / BCRC 13528 / IAM 13628 / NBRC 14792 / USDA 110).